A 1436-amino-acid polypeptide reads, in one-letter code: DNA polymerase III PolC-type (1436 aa).

Positions 420 to 576 constitute an Exonuclease domain; sequence YVVFDVETTG…YDTEATAYIF (157 aa).

It belongs to the DNA polymerase type-C family. PolC subfamily.

It is found in the cytoplasm. The enzyme catalyses DNA(n) + a 2'-deoxyribonucleoside 5'-triphosphate = DNA(n+1) + diphosphate. Functionally, required for replicative DNA synthesis. This DNA polymerase also exhibits 3' to 5' exonuclease activity. In Staphylococcus aureus (strain MW2), this protein is DNA polymerase III PolC-type.